A 505-amino-acid polypeptide reads, in one-letter code: Glutamate--tRNA ligase (505 aa).

Positions 12–22 match the 'HIGH' region motif; it reads PSPTGDPHVGT. The 'KMSKS' region signature appears at 253–257; sequence KLSKR. Lys256 contributes to the ATP binding site.

The protein belongs to the class-I aminoacyl-tRNA synthetase family. Glutamate--tRNA ligase type 1 subfamily. As to quaternary structure, monomer.

The protein localises to the cytoplasm. The enzyme catalyses tRNA(Glu) + L-glutamate + ATP = L-glutamyl-tRNA(Glu) + AMP + diphosphate. Its function is as follows. Catalyzes the attachment of glutamate to tRNA(Glu) in a two-step reaction: glutamate is first activated by ATP to form Glu-AMP and then transferred to the acceptor end of tRNA(Glu). This chain is Glutamate--tRNA ligase, found in Chlamydia caviae (strain ATCC VR-813 / DSM 19441 / 03DC25 / GPIC) (Chlamydophila caviae).